We begin with the raw amino-acid sequence, 234 residues long: 2-C-methyl-D-erythritol 4-phosphate cytidylyltransferase (234 aa).

It belongs to the IspD/TarI cytidylyltransferase family. IspD subfamily.

The enzyme catalyses 2-C-methyl-D-erythritol 4-phosphate + CTP + H(+) = 4-CDP-2-C-methyl-D-erythritol + diphosphate. It functions in the pathway isoprenoid biosynthesis; isopentenyl diphosphate biosynthesis via DXP pathway; isopentenyl diphosphate from 1-deoxy-D-xylulose 5-phosphate: step 2/6. Catalyzes the formation of 4-diphosphocytidyl-2-C-methyl-D-erythritol from CTP and 2-C-methyl-D-erythritol 4-phosphate (MEP). In Pseudomonas aeruginosa (strain ATCC 15692 / DSM 22644 / CIP 104116 / JCM 14847 / LMG 12228 / 1C / PRS 101 / PAO1), this protein is 2-C-methyl-D-erythritol 4-phosphate cytidylyltransferase.